A 469-amino-acid chain; its full sequence is NADH-quinone oxidoreductase subunit N (469 aa).

14 helical membrane-spanning segments follow: residues 2-22 (IALL…FLCV), 28-48 (RYSI…FFIV), 70-90 (FSFC…ISSF), 101-121 (EMFA…LSVE), 122-142 (LILT…MIAM), 157-177 (FLLS…VFGV), 194-214 (FLSI…IAIF), 233-253 (GFLA…LCFL), 261-281 (ILQG…NLLS), 290-310 (ILIA…SSVG), 315-335 (IYPA…LFAI), 361-381 (AFAF…VGFL), 398-418 (LAIF…KIII), and 447-467 (ILFI…LNLF).

Belongs to the complex I subunit 2 family. In terms of assembly, NDH-1 is composed of 14 different subunits. Subunits NuoA, H, J, K, L, M, N constitute the membrane sector of the complex.

The protein resides in the cell inner membrane. It carries out the reaction a quinone + NADH + 5 H(+)(in) = a quinol + NAD(+) + 4 H(+)(out). NDH-1 shuttles electrons from NADH, via FMN and iron-sulfur (Fe-S) centers, to quinones in the respiratory chain. The immediate electron acceptor for the enzyme in this species is believed to be ubiquinone. Couples the redox reaction to proton translocation (for every two electrons transferred, four hydrogen ions are translocated across the cytoplasmic membrane), and thus conserves the redox energy in a proton gradient. In Campylobacter fetus subsp. fetus (strain 82-40), this protein is NADH-quinone oxidoreductase subunit N.